A 161-amino-acid polypeptide reads, in one-letter code: Cyclin-dependent protein kinase inhibitor SMR12 (161 aa).

The span at 84–93 (EEEEVVEEEN) shows a compositional bias: acidic residues. Residues 84–106 (EEEEVVEEENDGFKTPTRPENRI) form a disordered region.

In terms of biological role, probable cyclin-dependent protein kinase (CDK) inhibitor that functions as a repressor of mitosis in the endoreduplication cell cycle. The chain is Cyclin-dependent protein kinase inhibitor SMR12 from Arabidopsis thaliana (Mouse-ear cress).